We begin with the raw amino-acid sequence, 215 residues long: Ependymin-1 (215 aa).

Positions Met-1–Ala-20 are cleaved as a signal peptide. 2 N-linked (GlcNAc...) asparagine glycosylation sites follow: Asn-71 and Asn-94.

It belongs to the ependymin family. As to quaternary structure, forms disulfide-linked dimers. Post-translationally, different glycosylation variants are known as EPD-beta and EPD-gamma. Binds calcium through the terminal sialic acids. EPDs are synthesized in the meninx and secreted in the cerebrospinal fluid.

It localises to the secreted. In terms of biological role, may play a role in neural plasticity. May be involved during axon regeneration. This chain is Ependymin-1 (epd1), found in Carassius auratus (Goldfish).